The following is a 382-amino-acid chain: F-box protein At3g19470 (382 aa).

Residues 1 to 44 (MYNLPRDLPEEVLCRIPLTSLRPVRSTCKKWSTLSKCGSFAKKH) form the F-box domain.

This Arabidopsis thaliana (Mouse-ear cress) protein is F-box protein At3g19470.